We begin with the raw amino-acid sequence, 123 residues long: UPF0102 protein Pcar_2217 (123 aa).

This sequence belongs to the UPF0102 family.

The polypeptide is UPF0102 protein Pcar_2217 (Syntrophotalea carbinolica (strain DSM 2380 / NBRC 103641 / GraBd1) (Pelobacter carbinolicus)).